Here is a 224-residue protein sequence, read N- to C-terminus: UPF0758 protein PSHAa2643 (224 aa).

The MPN domain occupies 102-224; it reads IFNSPNAVYD…CVSFAERGLI (123 aa). 3 residues coordinate Zn(2+): histidine 173, histidine 175, and aspartate 186. Positions 173–186 match the JAMM motif motif; sequence HNHPSGIAEPSQAD.

The protein belongs to the UPF0758 family.

This chain is UPF0758 protein PSHAa2643, found in Pseudoalteromonas translucida (strain TAC 125).